The primary structure comprises 359 residues: MGDRPAVRISAAITPVQQMLASGTGAVLTSLFVTPLDVVKIRLQAQQTPLFQAIAAESRPWFRVTRPSKWKCFLYCNGLMDHVYVCQNMSSCSNLYKTSTHFSGTLDAFVKITHNEGLRSLWSGLPPTLVMAVPATVIYFTCYDQLRDFLCYSMGYHGDHIPLIAGGLARLGAVSVISPLELVRTKMQSRRLQYSELMVCIRSSVAQDGWLSLWRGWGPTVLRDVPFSALYWFNYELVKAQLCEHYRTPQASFTISFTAGAVSGAIAAVLTLPFDVVKTRRQIQLGEMEALGAVSMKKPSSTWNMMRNIWIDMGYKGLFAGFLPRVIKVAPACAVMISTYEFGKTFFQERNLHQARCGL.

Topologically, residues 1–18 (MGDRPAVRISAAITPVQQ) are mitochondrial intermembrane. Solcar repeat units follow at residues 13-149 (ITPV…LRDF), 157-241 (HGDH…VKAQ), and 251-346 (ASFT…GKTF). The chain crosses the membrane as a helical span at residues 19–39 (MLASGTGAVLTSLFVTPLDVV). The Mitochondrial matrix portion of the chain corresponds to 40 to 119 (KIRLQAQQTP…VKITHNEGLR (80 aa)). [2Fe-2S] cluster is bound by residues C72, C76, C86, and C92. The helical transmembrane segment at 120 to 140 (SLWSGLPPTLVMAVPATVIYF) threads the bilayer. Over 141-162 (TCYDQLRDFLCYSMGYHGDHIP) the chain is Mitochondrial intermembrane. The helical transmembrane segment at 163–183 (LIAGGLARLGAVSVISPLELV) threads the bilayer. The Mitochondrial matrix segment spans residues 184–212 (RTKMQSRRLQYSELMVCIRSSVAQDGWLS). The chain crosses the membrane as a helical span at residues 213-233 (LWRGWGPTVLRDVPFSALYWF). The Mitochondrial intermembrane portion of the chain corresponds to 234 to 253 (NYELVKAQLCEHYRTPQASF). A helical transmembrane segment spans residues 254 to 274 (TISFTAGAVSGAIAAVLTLPF). Residues 275–316 (DVVKTRRQIQLGEMEALGAVSMKKPSSTWNMMRNIWIDMGYK) are Mitochondrial matrix-facing. The chain crosses the membrane as a helical span at residues 317–337 (GLFAGFLPRVIKVAPACAVMI). Residues 338-359 (STYEFGKTFFQERNLHQARCGL) lie on the Mitochondrial intermembrane side of the membrane.

Belongs to the mitochondrial carrier (TC 2.A.29) family. Post-translationally, cleaved and degraded by AFG3L2; degradation by AFG3L2 is regulated by the ability of SLC25A39 to bind iron-sulfur. In absence of mitochondrial glutathione, SLC25A39 binds iron-sulfur, preventing cleavage and degradation by AFG3L2. The presence of mitochondrial glutathione prevents iron-sulfur-binding to SLC25A39, promoting cleavage and degradation by AFG3L2.

Its subcellular location is the mitochondrion inner membrane. It catalyses the reaction glutathione(in) = glutathione(out). With respect to regulation, the activity of SLC25A39 is regulated by levels of mitochondrial glutathione via its ability to bind [2Fe-2S] iron-sulfur cluster. Upon physiological levels of mitochondrial glutathione, glutathione prevents iron-sulfur-binding to SLC25A39 promoting cleavage and degradation by AFG3L2. Upon depletion of mitochondrial glutathione, SLC25A39 binds iron-sulfur, preventing cleavage and degradation by AFG3L2. Its function is as follows. Mitochondrial transporter required for glutathione import into mitochondria. Glutathione, which plays key roles in oxidative metabolism, is produced exclusively in the cytosol and is imported in many organelles. Mitochondrial glutathione is required for the activity and stability of proteins containing iron-sulfur clusters, as well as erythropoiesis. Involved in the early steps of heme biosynthesis. In Danio rerio (Zebrafish), this protein is Mitochondrial glutathione transporter SLC25A39 (slc25a39).